Consider the following 223-residue polypeptide: All-trans retinoic acid-induced differentiation factor (223 aa).

Positions 1–25 (MASRESGGSRAAALLLVLGVERALA) are cleaved as a signal peptide. Topologically, residues 26–193 (LPEICTLCPG…YKCMRQGSFS (168 aa)) are extracellular. Residues 146-187 (QRDLCNSTGSPEMCPENGSCASDGPGLLQCVCADGFHGYKCM) enclose the EGF-like domain. Disulfide bonds link cysteine 150/cysteine 165, cysteine 159/cysteine 175, and cysteine 177/cysteine 186. A helical membrane pass occupies residues 194–214 (LLMFFGILGSTTLAISILLWG). Over 215–223 (TQRRKAKAS) the chain is Cytoplasmic.

In terms of assembly, interacts with NELL1; the interaction promotes osteoblastic differentiation and mineralization. Interacts with SLC37A3; the interaction is direct and both proteins are mutually dependent for their stability.

It is found in the nucleus envelope. It localises to the cell membrane. The protein resides in the lysosome membrane. Its function is as follows. Promotes osteoblast cell differentiation and terminal mineralization. Plays a role in inducing the cell cycle arrest via inhibiting CCND1 expression in all-trans-retinoic acid (ATRA) signal pathway. In osteoclasts, forms a transporter complex with ATRAID for nitrogen-containing-bisphophonates (N-BPs) required for releasing N-BP molecules that have trafficked to lysosomes through fluid-phase endocytosis into the cytosol. This Mus musculus (Mouse) protein is All-trans retinoic acid-induced differentiation factor (Atraid).